The chain runs to 121 residues: Small ribosomal subunit protein uS13 (121 aa).

Residues 94-121 (SLPVRGQNTKNNSRTRKGPRRTVANKKK) form a disordered region. Residues 106–121 (SRTRKGPRRTVANKKK) are compositionally biased toward basic residues.

It belongs to the universal ribosomal protein uS13 family. In terms of assembly, part of the 30S ribosomal subunit. Forms a loose heterodimer with protein S19. Forms two bridges to the 50S subunit in the 70S ribosome.

Its function is as follows. Located at the top of the head of the 30S subunit, it contacts several helices of the 16S rRNA. In the 70S ribosome it contacts the 23S rRNA (bridge B1a) and protein L5 of the 50S subunit (bridge B1b), connecting the 2 subunits; these bridges are implicated in subunit movement. Contacts the tRNAs in the A and P-sites. This Exiguobacterium sp. (strain ATCC BAA-1283 / AT1b) protein is Small ribosomal subunit protein uS13.